A 329-amino-acid chain; its full sequence is MAMTPAVKNEISHLPVTRTCCRKAEVSAILRFAGGLHLVSGRIVIEAELDTGNAARRLKRDILEIFGHSSELIVMAPGGLRRGSRFVVRVVAGGDQLARQTGLVDGRGRPIRGLPPQVVSGATCDAEAAWRGAFLAHGSLTEPGRSSSLEVTCPGPEAALALVGAARRLSIAAKAREVRGVDRVVVRDGDAIGALLTRLGAHDAVLAWEERRMRREVRATANRLANFDDANLRRSARAAVAAGARVGRALEILGEEVPEHLAAAGRLRMEHKQASLEELGALADPPLTKDAVAGRIRRLLAMADKRAQDLGIPGTESTLSEELADGLVG.

The segment at residues 275-308 (SLEELGALADPPLTKDAVAGRIRRLLAMADKRAQ) is a DNA-binding region (H-T-H motif).

This sequence belongs to the WhiA family.

In terms of biological role, involved in cell division and chromosome segregation. This Streptomyces griseus subsp. griseus (strain JCM 4626 / CBS 651.72 / NBRC 13350 / KCC S-0626 / ISP 5235) protein is Probable cell division protein WhiA.